The chain runs to 507 residues: GMP synthase [glutamine-hydrolyzing] (507 aa).

Positions 3–190 constitute a Glutamine amidotransferase type-1 domain; sequence KILVIDYGSQ…IQGICGLKGS (188 aa). C77 acts as the Nucleophile in catalysis. Active-site residues include H164 and E166. A GMPS ATP-PPase domain is found at 191–382; the sequence is WTLMDFVENK…LGLPREILYR (192 aa). 218-224 lines the ATP pocket; the sequence is SGGVDSS.

Homodimer.

The catalysed reaction is XMP + L-glutamine + ATP + H2O = GMP + L-glutamate + AMP + diphosphate + 2 H(+). It functions in the pathway purine metabolism; GMP biosynthesis; GMP from XMP (L-Gln route): step 1/1. Functionally, catalyzes the synthesis of GMP from XMP. The sequence is that of GMP synthase [glutamine-hydrolyzing] from Petrotoga mobilis (strain DSM 10674 / SJ95).